A 280-amino-acid polypeptide reads, in one-letter code: Thymidylate synthase (280 aa).

Position 21 (Arg21) interacts with dUMP. Residue His51 participates in (6R)-5,10-methylene-5,6,7,8-tetrahydrofolate binding. 142 to 143 (RR) is a binding site for dUMP. Residue Cys162 is the Nucleophile of the active site. DUMP contacts are provided by residues 182 to 185 (RSAD), Asn193, and 223 to 225 (HLY). Asp185 contributes to the (6R)-5,10-methylene-5,6,7,8-tetrahydrofolate binding site. Residue Ala279 coordinates (6R)-5,10-methylene-5,6,7,8-tetrahydrofolate.

It belongs to the thymidylate synthase family. Bacterial-type ThyA subfamily. As to quaternary structure, homodimer.

The protein resides in the cytoplasm. It catalyses the reaction dUMP + (6R)-5,10-methylene-5,6,7,8-tetrahydrofolate = 7,8-dihydrofolate + dTMP. The protein operates within pyrimidine metabolism; dTTP biosynthesis. Functionally, catalyzes the reductive methylation of 2'-deoxyuridine-5'-monophosphate (dUMP) to 2'-deoxythymidine-5'-monophosphate (dTMP) while utilizing 5,10-methylenetetrahydrofolate (mTHF) as the methyl donor and reductant in the reaction, yielding dihydrofolate (DHF) as a by-product. This enzymatic reaction provides an intracellular de novo source of dTMP, an essential precursor for DNA biosynthesis. The chain is Thymidylate synthase from Acinetobacter baylyi (strain ATCC 33305 / BD413 / ADP1).